Here is a 457-residue protein sequence, read N- to C-terminus: UDP-N-acetylmuramate--L-alanine ligase (457 aa).

109 to 115 (GTDGKTT) contributes to the ATP binding site.

The protein belongs to the MurCDEF family.

It is found in the cytoplasm. The enzyme catalyses UDP-N-acetyl-alpha-D-muramate + L-alanine + ATP = UDP-N-acetyl-alpha-D-muramoyl-L-alanine + ADP + phosphate + H(+). The protein operates within cell wall biogenesis; peptidoglycan biosynthesis. Its function is as follows. Cell wall formation. The polypeptide is UDP-N-acetylmuramate--L-alanine ligase (Thermotoga neapolitana (strain ATCC 49049 / DSM 4359 / NBRC 107923 / NS-E)).